The primary structure comprises 384 residues: Cyclin-J (384 aa).

The Cyclin N-terminal domain occupies 15–143; that stretch reads DIHQTLRYKE…LLETFEWNLC (129 aa).

This sequence belongs to the cyclin family. Cyclin J subfamily.

The polypeptide is Cyclin-J (ccnj) (Xenopus laevis (African clawed frog)).